A 232-amino-acid chain; its full sequence is Large ribosomal subunit protein uL1 (232 aa).

This sequence belongs to the universal ribosomal protein uL1 family. Part of the 50S ribosomal subunit.

In terms of biological role, binds directly to 23S rRNA. The L1 stalk is quite mobile in the ribosome, and is involved in E site tRNA release. Protein L1 is also a translational repressor protein, it controls the translation of the L11 operon by binding to its mRNA. The sequence is that of Large ribosomal subunit protein uL1 from Alkaliphilus metalliredigens (strain QYMF).